Here is a 177-residue protein sequence, read N- to C-terminus: FMRFamide-like neuropeptides 7 (177 aa).

Residues Met-1–Ala-19 form the signal peptide. The propeptide occupies Glu-20–Gln-49. The disordered stretch occupies residues Gln-25–Arg-106. Phenylalanine amide occurs at positions 62, 75, 89, 103, 117, and 130. Residue Leu-143 is modified to Leucine amide. Residue Phe-157 is modified to Phenylalanine amide. The propeptide occupies Ser-161–Glu-177.

The protein belongs to the FARP (FMRFamide related peptide) family. Expressed in the ASI sensory neurons, the ALA interneuron and the AVG interneuron from where secretion occurs. Expression in the ASI neurons is necessary and sufficient to maintain serotonin-induced fat loss.

The protein localises to the secreted. FMRFamide-like neuropeptides. Stimulates serotonin-induced fat loss by binding to and activating the npr-22 receptor which leads to induction of the atgl-1 lipase and subsequent fat loss. Together with atfs-1, negatively regulates the expression of the transcription regulator hlh-11, to promote expression of atgl-1, and thus atgl-1-dependent fat oxidation in response to mitochondrial stress. Functionally, TPMQRSSMVRF-amide: Acts as a ligand for the npr-22 receptor in vitro. Its function is as follows. SPMQRSSMVRF-amide: Acts as a ligand for the npr-22 receptor in vitro. In terms of biological role, acts as a ligand for the npr-22 receptor in vitro. This chain is FMRFamide-like neuropeptides 7, found in Caenorhabditis elegans.